A 297-amino-acid polypeptide reads, in one-letter code: Indole-3-glycerol phosphate synthase (297 aa).

This sequence belongs to the TrpC family.

It catalyses the reaction 1-(2-carboxyphenylamino)-1-deoxy-D-ribulose 5-phosphate + H(+) = (1S,2R)-1-C-(indol-3-yl)glycerol 3-phosphate + CO2 + H2O. It functions in the pathway amino-acid biosynthesis; L-tryptophan biosynthesis; L-tryptophan from chorismate: step 4/5. The polypeptide is Indole-3-glycerol phosphate synthase (Trichodesmium erythraeum (strain IMS101)).